A 460-amino-acid polypeptide reads, in one-letter code: tRNA modification GTPase MnmE (460 aa).

R29, E91, and K132 together coordinate (6S)-5-formyl-5,6,7,8-tetrahydrofolate. Residues 227–383 (GISIALIGKT…LIDTIIKKCG (157 aa)) form the TrmE-type G domain. Residue N237 coordinates K(+). Residues 237–242 (NVGKSS), 256–262 (TNIPGTT), and 281–284 (DTAG) each bind GTP. Residue S241 coordinates Mg(2+). Positions 256, 258, and 261 each coordinate K(+). T262 is a Mg(2+) binding site. (6S)-5-formyl-5,6,7,8-tetrahydrofolate is bound at residue K460.

This sequence belongs to the TRAFAC class TrmE-Era-EngA-EngB-Septin-like GTPase superfamily. TrmE GTPase family. In terms of assembly, homodimer. Heterotetramer of two MnmE and two MnmG subunits. Requires K(+) as cofactor.

It localises to the cytoplasm. Functionally, exhibits a very high intrinsic GTPase hydrolysis rate. Involved in the addition of a carboxymethylaminomethyl (cmnm) group at the wobble position (U34) of certain tRNAs, forming tRNA-cmnm(5)s(2)U34. In Prochlorococcus marinus (strain MIT 9301), this protein is tRNA modification GTPase MnmE.